Consider the following 276-residue polypeptide: Secretagogin (276 aa).

6 consecutive EF-hand domains span residues 12–47 (LDAA…VLTK), 58–93 (NVWK…EDEN), 105–140 (DSSV…LFLH), 149–184 (KLEE…QENF), 197–232 (ERKR…MMEL), and 240–276 (VDLD…KINP). Ca(2+) contacts are provided by aspartate 71, serine 73, aspartate 75, histidine 77, glutamate 82, aspartate 118, aspartate 120, serine 122, glutamate 129, aspartate 162, asparagine 164, aspartate 166, arginine 168, aspartate 173, aspartate 210, serine 212, threonine 214, glutamate 221, aspartate 254, asparagine 256, aspartate 258, lysine 260, and glutamate 265.

The protein localises to the cytoplasm. It is found in the secreted. The protein resides in the cytoplasmic vesicle. Its subcellular location is the secretory vesicle membrane. The chain is Secretagogin (SCGN) from Sus scrofa (Pig).